The following is a 322-amino-acid chain: Solute carrier family 35 member B1 (322 aa).

8 consecutive transmembrane segments (helical) span residues 12–32, 51–71, 85–105, 136–156, 168–188, 210–230, 243–263, and 285–305; these read LRLP…GILQ, FALT…KILI, WLYA…NSAL, YPLA…LFMY, TVGF…LTGV, LWST…WEFL, ILLF…TVVY, and VILF…LVFL. A Di-lysine motif motif is present at residues 318–322; sequence KKTSH.

It belongs to the nucleotide-sugar transporter family. SLC35B subfamily.

The protein resides in the endoplasmic reticulum membrane. The enzyme catalyses ADP(in) + ATP(out) = ADP(out) + ATP(in). It catalyses the reaction UDP(out) + ATP(in) = UDP(in) + ATP(out). The catalysed reaction is UTP(out) + ATP(in) = UTP(in) + ATP(out). It carries out the reaction dATP(out) + ATP(in) = dATP(in) + ATP(out). Its function is as follows. ATP:ADP antiporter that catalyzes the exchange of ATP and ADP across the endoplasmic reticulum (ER) membrane. Imports ATP from the cytosol to the ER lumen and exports ADP in the opposite direction. Regulates ER energy metabolism and protein biogenesis. Appears to be part of a calcium-dependent ER to cytosol low energy response axis, where calcium efflux from ER to the cytosol triggers ATP import into the ER lumen to maintain sufficient ATP supply. Provides ATP to ER chaperone HSPA5 that drives protein folding and trafficking in the ER. Can transport dATP, UTP or UDP in exchange for ATP, but the physiological relevance of this process remains to be established. In Mus musculus (Mouse), this protein is Solute carrier family 35 member B1 (Slc35b1).